Here is a 240-residue protein sequence, read N- to C-terminus: UDP-2,3-diacylglucosamine hydrolase (240 aa).

Residues Asp-8, His-10, Asp-41, Asn-79, and His-114 each contribute to the Mn(2+) site. Substrate is bound at residue 79-80 (NR). Positions 122, 160, 164, 167, and 195 each coordinate substrate. Mn(2+) is bound by residues His-195 and His-197.

Belongs to the LpxH family. It depends on Mn(2+) as a cofactor.

Its subcellular location is the cell inner membrane. The enzyme catalyses UDP-2-N,3-O-bis[(3R)-3-hydroxytetradecanoyl]-alpha-D-glucosamine + H2O = 2-N,3-O-bis[(3R)-3-hydroxytetradecanoyl]-alpha-D-glucosaminyl 1-phosphate + UMP + 2 H(+). The protein operates within glycolipid biosynthesis; lipid IV(A) biosynthesis; lipid IV(A) from (3R)-3-hydroxytetradecanoyl-[acyl-carrier-protein] and UDP-N-acetyl-alpha-D-glucosamine: step 4/6. Its function is as follows. Hydrolyzes the pyrophosphate bond of UDP-2,3-diacylglucosamine to yield 2,3-diacylglucosamine 1-phosphate (lipid X) and UMP by catalyzing the attack of water at the alpha-P atom. Involved in the biosynthesis of lipid A, a phosphorylated glycolipid that anchors the lipopolysaccharide to the outer membrane of the cell. The polypeptide is UDP-2,3-diacylglucosamine hydrolase (Escherichia fergusonii (strain ATCC 35469 / DSM 13698 / CCUG 18766 / IAM 14443 / JCM 21226 / LMG 7866 / NBRC 102419 / NCTC 12128 / CDC 0568-73)).